The sequence spans 339 residues: Replication factor C subunit 5 (339 aa).

59–66 (GPPGTGKT) lines the ATP pocket.

Belongs to the activator 1 small subunits family. As to quaternary structure, subunit of the RFC complex, an heteropentameric complex consisting of a large subunit RFC1 and four small subunits RFC2, RFC3, RFC4 and RFC5; the RFC complex interacts with PCNA. Forms an heterotetrameric complex with RFC2, RFC3 and RFC4; this complex has ATPase activity but is not stimulated by PCNA. The heterotetramer of subunits RFC2, RFC3, RFC4 and RFC5 interacts with RAD17.

Its subcellular location is the nucleus. Subunit of the replication factor C (RFC) complex which acts during elongation of primed DNA templates by DNA polymerases delta and epsilon, and is necessary for ATP-dependent loading of proliferating cell nuclear antigen (PCNA) onto primed DNA. This is Replication factor C subunit 5 (Rfc5) from Mus musculus (Mouse).